The following is a 340-amino-acid chain: tRNA N6-adenosine threonylcarbamoyltransferase (340 aa).

2 residues coordinate Fe cation: His111 and His115. Residues 134–138, Asp167, Gly180, and Asn276 each bind substrate; that span reads LVSGG. Asp304 is a Fe cation binding site.

This sequence belongs to the KAE1 / TsaD family. Fe(2+) is required as a cofactor.

Its subcellular location is the cytoplasm. The catalysed reaction is L-threonylcarbamoyladenylate + adenosine(37) in tRNA = N(6)-L-threonylcarbamoyladenosine(37) in tRNA + AMP + H(+). Functionally, required for the formation of a threonylcarbamoyl group on adenosine at position 37 (t(6)A37) in tRNAs that read codons beginning with adenine. Is involved in the transfer of the threonylcarbamoyl moiety of threonylcarbamoyl-AMP (TC-AMP) to the N6 group of A37, together with TsaE and TsaB. TsaD likely plays a direct catalytic role in this reaction. This is tRNA N6-adenosine threonylcarbamoyltransferase from Helicobacter pylori (strain G27).